Consider the following 474-residue polypeptide: L-arabinose isomerase (474 aa).

Mn(2+) is bound by residues Glu306, Glu331, His348, and His447.

This sequence belongs to the arabinose isomerase family. The cofactor is Mn(2+).

The enzyme catalyses beta-L-arabinopyranose = L-ribulose. The protein operates within carbohydrate degradation; L-arabinose degradation via L-ribulose; D-xylulose 5-phosphate from L-arabinose (bacterial route): step 1/3. In terms of biological role, catalyzes the conversion of L-arabinose to L-ribulose. The polypeptide is L-arabinose isomerase (Levilactobacillus brevis (strain ATCC 367 / BCRC 12310 / CIP 105137 / JCM 1170 / LMG 11437 / NCIMB 947 / NCTC 947) (Lactobacillus brevis)).